Consider the following 995-residue polypeptide: UPF0182 protein MMAR_1371 (995 aa).

7 consecutive transmembrane segments (helical) span residues 18-38, 63-83, 113-133, 175-195, 210-230, 259-279, and 287-307; these read VLIL…RLID, FLVF…GLAL, LFGI…AQSY, FVAI…FGGI, IQLV…YWLD, KLIL…AIVL, and IGLV…PMIV. Residues 900–948 form a disordered region; that stretch reads AATGIQPTEGGAPANVPPNNAPSPEALPGTPPSPPTAVPPAPEASVTLS. The segment covering 928–941 has biased composition (pro residues); it reads GTPPSPPTAVPPAP.

It belongs to the UPF0182 family.

It is found in the cell membrane. This is UPF0182 protein MMAR_1371 from Mycobacterium marinum (strain ATCC BAA-535 / M).